The following is a 24-amino-acid chain: Major pollen allergen Ole e 4 (24 aa).

The protein belongs to the glycosyl hydrolase 17 family. In terms of processing, the N-terminus is blocked.

In Olea europaea (Common olive), this protein is Major pollen allergen Ole e 4.